Reading from the N-terminus, the 402-residue chain is 4-hydroxy-3-methylbut-2-enyl diphosphate reductase (402 aa).

Cys66 contributes to the [4Fe-4S] cluster binding site. His96 serves as a coordination point for (2E)-4-hydroxy-3-methylbut-2-enyl diphosphate. His96 is a dimethylallyl diphosphate binding site. His96 is an isopentenyl diphosphate binding site. Cys157 contacts [4Fe-4S] cluster. His185 contacts (2E)-4-hydroxy-3-methylbut-2-enyl diphosphate. Residue His185 participates in dimethylallyl diphosphate binding. His185 contributes to the isopentenyl diphosphate binding site. Glu187 acts as the Proton donor in catalysis. Thr250 provides a ligand contact to (2E)-4-hydroxy-3-methylbut-2-enyl diphosphate. A [4Fe-4S] cluster-binding site is contributed by Cys288. (2E)-4-hydroxy-3-methylbut-2-enyl diphosphate-binding residues include Ser317, Ser318, Asn319, and Ser379. Dimethylallyl diphosphate-binding residues include Ser317, Ser318, Asn319, and Ser379. Residues Ser317, Ser318, Asn319, and Ser379 each contribute to the isopentenyl diphosphate site.

The protein belongs to the IspH family. [4Fe-4S] cluster serves as cofactor.

It carries out the reaction isopentenyl diphosphate + 2 oxidized [2Fe-2S]-[ferredoxin] + H2O = (2E)-4-hydroxy-3-methylbut-2-enyl diphosphate + 2 reduced [2Fe-2S]-[ferredoxin] + 2 H(+). The catalysed reaction is dimethylallyl diphosphate + 2 oxidized [2Fe-2S]-[ferredoxin] + H2O = (2E)-4-hydroxy-3-methylbut-2-enyl diphosphate + 2 reduced [2Fe-2S]-[ferredoxin] + 2 H(+). It participates in isoprenoid biosynthesis; dimethylallyl diphosphate biosynthesis; dimethylallyl diphosphate from (2E)-4-hydroxy-3-methylbutenyl diphosphate: step 1/1. It functions in the pathway isoprenoid biosynthesis; isopentenyl diphosphate biosynthesis via DXP pathway; isopentenyl diphosphate from 1-deoxy-D-xylulose 5-phosphate: step 6/6. Catalyzes the conversion of 1-hydroxy-2-methyl-2-(E)-butenyl 4-diphosphate (HMBPP) into a mixture of isopentenyl diphosphate (IPP) and dimethylallyl diphosphate (DMAPP). Acts in the terminal step of the DOXP/MEP pathway for isoprenoid precursor biosynthesis. This is 4-hydroxy-3-methylbut-2-enyl diphosphate reductase from Microcystis aeruginosa (strain NIES-843 / IAM M-2473).